The primary structure comprises 353 residues: Photosystem II D2 protein (353 aa).

T2 is subject to N-acetylthreonine. Phosphothreonine is present on T2. Residues 41–61 (CAYFALGGWFTGTTFVTSWYT) traverse the membrane as a helical segment. A chlorophyll a-binding site is contributed by H118. A helical transmembrane segment spans residues 125 to 141 (GFMLRQFELARSVQLRP). Residues Q130 and N143 each coordinate pheophytin a. A helical transmembrane segment spans residues 153–166 (VFVSVFLIYPLGQS). H198 lines the chlorophyll a pocket. Residues 208-228 (AALLCAIHGATVENTLFEDGD) form a helical membrane-spanning segment. Residues H215 and F262 each contribute to the a plastoquinone site. Fe cation is bound at residue H215. H269 provides a ligand contact to Fe cation. The helical transmembrane segment at 279 to 295 (GLWMSAIGVVGLALNLR) threads the bilayer.

It belongs to the reaction center PufL/M/PsbA/D family. In terms of assembly, PSII is composed of 1 copy each of membrane proteins PsbA, PsbB, PsbC, PsbD, PsbE, PsbF, PsbH, PsbI, PsbJ, PsbK, PsbL, PsbM, PsbT, PsbX, PsbY, PsbZ, Psb30/Ycf12, at least 3 peripheral proteins of the oxygen-evolving complex and a large number of cofactors. It forms dimeric complexes. The cofactor is The D1/D2 heterodimer binds P680, chlorophylls that are the primary electron donor of PSII, and subsequent electron acceptors. It shares a non-heme iron and each subunit binds pheophytin, quinone, additional chlorophylls, carotenoids and lipids. There is also a Cl(-1) ion associated with D1 and D2, which is required for oxygen evolution. The PSII complex binds additional chlorophylls, carotenoids and specific lipids..

The protein localises to the plastid. The protein resides in the chloroplast thylakoid membrane. The enzyme catalyses 2 a plastoquinone + 4 hnu + 2 H2O = 2 a plastoquinol + O2. Its function is as follows. Photosystem II (PSII) is a light-driven water:plastoquinone oxidoreductase that uses light energy to abstract electrons from H(2)O, generating O(2) and a proton gradient subsequently used for ATP formation. It consists of a core antenna complex that captures photons, and an electron transfer chain that converts photonic excitation into a charge separation. The D1/D2 (PsbA/PsbD) reaction center heterodimer binds P680, the primary electron donor of PSII as well as several subsequent electron acceptors. D2 is needed for assembly of a stable PSII complex. The protein is Photosystem II D2 protein of Cycas taitungensis (Prince sago).